The primary structure comprises 375 residues: Alcohol dehydrogenase 6 (375 aa).

S23 is modified (phosphoserine). 7 residues coordinate Zn(2+): C47, H69, C99, C102, C105, C113, and C175. NAD(+) is bound by residues G200–G205, D224, K229, V293–L295, and R370.

The protein belongs to the zinc-containing alcohol dehydrogenase family. Class-V subfamily. As to quaternary structure, dimer. Zn(2+) is required as a cofactor.

Its subcellular location is the cytoplasm. The enzyme catalyses a primary alcohol + NAD(+) = an aldehyde + NADH + H(+). It catalyses the reaction a secondary alcohol + NAD(+) = a ketone + NADH + H(+). Alcohol dehydrogenase. Catalyzes the NAD-dependent oxidation of primary alcohols to the corresponding aldehydes. Oxidizes secondary alcohols to the corresponding ketones. The sequence is that of Alcohol dehydrogenase 6 (ADH6) from Pongo abelii (Sumatran orangutan).